Here is a 455-residue protein sequence, read N- to C-terminus: Probable glucarate dehydratase (455 aa).

Histidine 42, threonine 113, tyrosine 160, and lysine 215 together coordinate substrate. The active-site Proton acceptor is the lysine 217. The Mg(2+) site is built by aspartate 245, glutamate 276, and asparagine 299. 245 to 247 (DPN) serves as a coordination point for substrate. Substrate contacts are provided by residues asparagine 299, 349 to 351 (HSN), histidine 378, and arginine 431. Catalysis depends on histidine 349, which acts as the Proton acceptor.

It belongs to the mandelate racemase/muconate lactonizing enzyme family. GlucD subfamily. It depends on Mg(2+) as a cofactor.

The catalysed reaction is D-glucarate = 5-dehydro-4-deoxy-D-glucarate + H2O. It functions in the pathway carbohydrate acid metabolism; D-glucarate degradation; 2,5-dioxopentanoate from D-glucarate: step 1/2. Functionally, catalyzes the dehydration of glucarate to 5-keto-4-deoxy-D-glucarate (5-kdGluc). This Bacillus subtilis (strain 168) protein is Probable glucarate dehydratase (gudD).